A 2035-amino-acid chain; its full sequence is Proline-rich protein 12 (2035 aa).

Disordered regions lie at residues 210 to 280 (GGGV…ERAL), 292 to 311 (RPAS…LQHY), 329 to 584 (CSPL…GAPG), and 645 to 685 (QAPS…GTPY). Pro residues predominate over residues 223-240 (QTPPYRPGPPDPPPPPRH). Low complexity predominate over residues 249–261 (ASSSAATAAEPSS). Residues 296–305 (AQPPPPPPPA) are compositionally biased toward pro residues. Phosphoserine is present on residues Ser330 and Ser338. The span at 338–364 (SPGAGEPSKGGPSGATAGAAGRATGPE) shows a compositional bias: low complexity. Gly residues predominate over residues 365–377 (TAGGGAAGGGGGY). 2 stretches are compositionally biased toward low complexity: residues 408 to 429 (STAT…AGKA) and 437 to 455 (SQAY…QAYG). The segment covering 476 to 487 (PPQPPSGPPPPG) has biased composition (pro residues). Composition is skewed to polar residues over residues 490–501 (TCQSYSPDQLQG) and 520–534 (GLPT…STGH). Residues 540-555 (GHGGGWGPSSLGGGGE) show a composition bias toward gly residues. Ser648 is subject to Phosphoserine. Residues 670 to 681 (GLGGSGGAGGAP) are compositionally biased toward gly residues. Thr735 carries the phosphothreonine modification. Disordered stretches follow at residues 755–844 (AFLQ…PLQL), 851–870 (HGLE…SLEP), 879–920 (GALE…APRF), and 946–1061 (EMFG…CSTK). The segment covering 830 to 841 (PQPPPPPPPPMP) has biased composition (pro residues). A Phosphoserine modification is found at Ser859. Over residues 1031 to 1046 (SAPPPPPPPPPPPPVS) the composition is skewed to pro residues. Ser1070 and Ser1128 each carry phosphoserine. 4 disordered regions span residues 1112 to 1244 (RRLP…DHNS), 1288 to 1355 (PLYQ…SPCK), 1367 to 1567 (TLPS…GEGI), and 1662 to 1839 (HRPP…PGRL). Over residues 1190-1199 (KPRGRGRGRG) the composition is skewed to basic residues. A compositionally biased stretch (basic and acidic residues) spans 1200 to 1214 (RKAEEMGGTRLEPLK). Lys1214 carries the N6-acetyllysine modification. A Phosphothreonine modification is found at Thr1295. Residue Ser1299 is modified to Phosphoserine. Pro residues predominate over residues 1314–1329 (QPPPPTVPTVPHPAPS). 3 positions are modified to phosphoserine: Ser1372, Ser1373, and Ser1378. The span at 1449–1529 (PPTPPPAPTP…PPEEPPAPSP (81 aa)) shows a compositional bias: pro residues. The segment covering 1535–1547 (PDARPLHLAKKQE) has biased composition (basic and acidic residues). Thr1555 is subject to Phosphothreonine. Ser1562 carries the phosphoserine modification. The span at 1698–1709 (ETPEKMTSEKPP) shows a compositional bias: basic and acidic residues. Phosphothreonine is present on Thr1699. The span at 1710 to 1730 (EPAPEPAVPEPPAPEKPSPPR) shows a compositional bias: pro residues. Residues 1731–1768 (PVEKEKEKEKEKEKEKERVTRPLRSERATSGRQMRTDR) are compositionally biased toward basic and acidic residues. Residues 1769–1779 (SLATGQSTTSR) are compositionally biased toward polar residues. The segment covering 1817 to 1828 (SSSDSESSPGAP) has biased composition (low complexity). Ser1924 carries the phosphoserine modification.

As to expression, expressed in brain.

The protein localises to the nucleus. The protein resides in the postsynaptic density. Its subcellular location is the synapse. It localises to the synaptosome. The protein is Proline-rich protein 12 of Mus musculus (Mouse).